A 212-amino-acid chain; its full sequence is FMN-dependent NADH:quinone oxidoreductase (212 aa).

FMN is bound by residues S10, S16 to S18, and M98 to F101.

Belongs to the azoreductase type 1 family. Homodimer. It depends on FMN as a cofactor.

The catalysed reaction is 2 a quinone + NADH + H(+) = 2 a 1,4-benzosemiquinone + NAD(+). It catalyses the reaction N,N-dimethyl-1,4-phenylenediamine + anthranilate + 2 NAD(+) = 2-(4-dimethylaminophenyl)diazenylbenzoate + 2 NADH + 2 H(+). Its function is as follows. Quinone reductase that provides resistance to thiol-specific stress caused by electrophilic quinones. Also exhibits azoreductase activity. Catalyzes the reductive cleavage of the azo bond in aromatic azo compounds to the corresponding amines. The protein is FMN-dependent NADH:quinone oxidoreductase of Desulfotalea psychrophila (strain LSv54 / DSM 12343).